A 634-amino-acid chain; its full sequence is MAKHHPLTDWLPTSKKEMEAKGWDEADVILFSGDAYVDHPSFGAAVVGRILEAEGLRVAIVPQPNWRDDLRDFRKLGRPRLFFGVSAGAMDSMVNKYTANRRLRSEDAYTPDRRSDMRPDYPTIVYTRILKELFPDVPVIVGGIEASLRRLTHYDYWQDKLLPGILYQSGADLLIYGMGELPLHEIAQRLIAGEPFDSLKSIRQIAYLVPKGKTPVPCENDRHLFSHEECLSDKRKQAQNFREIEIQSNRYEADRILQAVGDSTIVVNPPFPPMSTAQIDQSFDLPYTRLPHPRYKGKIISAYEMIKHSVNVHRGCFGGCAFCTISAHQGKFIASRSEASVLREVKEITEMEDFKGYLSDVGGPSANMYKMQGYDLSICKRCKKPSCIHPNVCPNLNADHRPLLDLLRRIDKNPKIKKSFIGSGVRMDLLLHNYKDKVLKKAADEYTEDLIVKHVSGRLKVAPEHSSDRVLNLMRKPPFRQFAEFTKRFQRINEAHGLRQQLIPYFISSHPGCTEEDMAELAILTKKLDFKLEQIQDFTPTPMTLATEMYYTGYHPYTLQPVYTAIKKEEKMRQHMFFFWYKREEADKIRRELHRIGRPDLIAKLFDRTTSSRNDRHTPPSTQPRKSKSKSRHS.

The Radical SAM core domain occupies 302 to 582 (AYEMIKHSVN…RQHMFFFWYK (281 aa)). Positions 316, 320, and 323 each coordinate [4Fe-4S] cluster. The segment at 607–634 (DRTTSSRNDRHTPPSTQPRKSKSKSRHS) is disordered. Positions 625–634 (RKSKSKSRHS) are enriched in basic residues.

Belongs to the UPF0313 family. [4Fe-4S] cluster serves as cofactor.

The sequence is that of UPF0313 protein PG_0934 from Porphyromonas gingivalis (strain ATCC BAA-308 / W83).